The sequence spans 179 residues: Large ribosomal subunit protein uL6 (179 aa).

The protein belongs to the universal ribosomal protein uL6 family. As to quaternary structure, part of the 50S ribosomal subunit.

Its function is as follows. This protein binds to the 23S rRNA, and is important in its secondary structure. It is located near the subunit interface in the base of the L7/L12 stalk, and near the tRNA binding site of the peptidyltransferase center. The chain is Large ribosomal subunit protein uL6 from Chlorobium phaeobacteroides (strain DSM 266 / SMG 266 / 2430).